The chain runs to 493 residues: Cytoplasmic tRNA 2-thiolation protein 2 (493 aa).

Serine 489 bears the Phosphoserine mark.

The protein belongs to the CTU2/NCS2 family. As to quaternary structure, interacts with NCS6 and URM1. May act by forming a heterodimer with NCS6.

It localises to the cytoplasm. It participates in tRNA modification; 5-methoxycarbonylmethyl-2-thiouridine-tRNA biosynthesis. Functionally, plays a central role in 2-thiolation of mcm(5)S(2)U at tRNA wobble positions of tRNA(Lys), tRNA(Glu) and tRNA(Gln). May act by forming a heterodimer with NCS6 that ligates sulfur from thiocarboxylated URM1 onto the uridine of tRNAs at wobble position. Prior mcm(5) tRNA modification by the elongator complex is required for 2-thiolation. May also be involved in protein urmylation. The chain is Cytoplasmic tRNA 2-thiolation protein 2 from Saccharomyces cerevisiae (strain AWRI1631) (Baker's yeast).